Consider the following 263-residue polypeptide: Microtubule-associated protein RP/EB family member 1 (263 aa).

The Calponin-homology (CH) domain occupies 14–116; that stretch reads NLSRHDMLAW…FVQWFKKFFD (103 aa). The segment at 150 to 182 is disordered; it reads KPLGTGSAGPQRPIVAQRTPATPKGGTGMVKKA. Residues 180 to 250 enclose the EB1 C-terminal domain; that stretch reads KKAAGDDESA…LYATDEGFVI (71 aa).

The protein belongs to the MAPRE family.

Its subcellular location is the cytoplasm. It localises to the cytoskeleton. The protein localises to the microtubule organizing center. It is found in the centrosome. The protein resides in the golgi apparatus. Its subcellular location is the spindle. It localises to the spindle pole. Plus-end tracking protein (+TIP) that binds to the plus-end of microtubules and regulates the dynamics of the microtubule cytoskeleton. Promotes cytoplasmic microtubule nucleation and elongation. Involved in mitotic spindle positioning by stabilizing microtubules and promoting dynamic connection between astral microtubules and the cortex during mitotic chromosome segregation. The protein is Microtubule-associated protein RP/EB family member 1 (MAPRE1) of Coturnix japonica (Japanese quail).